The sequence spans 35 residues: MEALVYTFLLVGTLGIIFFAIFFREPPKVPVKGKK.

A helical membrane pass occupies residues 3 to 23 (ALVYTFLLVGTLGIIFFAIFF).

The protein belongs to the PsbT family. PSII is composed of 1 copy each of membrane proteins PsbA, PsbB, PsbC, PsbD, PsbE, PsbF, PsbH, PsbI, PsbJ, PsbK, PsbL, PsbM, PsbT, PsbY, PsbZ, Psb30/Ycf12, at least 3 peripheral proteins of the oxygen-evolving complex and a large number of cofactors. It forms dimeric complexes.

The protein localises to the plastid. The protein resides in the chloroplast thylakoid membrane. Its function is as follows. Found at the monomer-monomer interface of the photosystem II (PS II) dimer, plays a role in assembly and dimerization of PSII. PSII is a light-driven water plastoquinone oxidoreductase, using light energy to abstract electrons from H(2)O, generating a proton gradient subsequently used for ATP formation. The chain is Photosystem II reaction center protein T from Staurastrum punctulatum (Green alga).